Reading from the N-terminus, the 124-residue chain is Ribonuclease pancreatic A (124 aa).

Residues 1-24 (AESSAMKFERQHVDSGGSSSSNAN) are disordered. K7 and R10 together coordinate substrate. Residue H12 is the Proton acceptor of the active site. 4 disulfides stabilise this stretch: C26–C84, C40–C95, C58–C110, and C65–C72. Residues 41-45 (KPVNT), K66, and R85 each bind substrate. The active-site Proton donor is H119.

Belongs to the pancreatic ribonuclease family. Pancreas.

It localises to the secreted. The catalysed reaction is an [RNA] containing cytidine + H2O = an [RNA]-3'-cytidine-3'-phosphate + a 5'-hydroxy-ribonucleotide-3'-[RNA].. It catalyses the reaction an [RNA] containing uridine + H2O = an [RNA]-3'-uridine-3'-phosphate + a 5'-hydroxy-ribonucleotide-3'-[RNA].. The chain is Ribonuclease pancreatic A from Cavia porcellus (Guinea pig).